The following is a 345-amino-acid chain: MFTSTGSSGLYKAPLSKSLLLVPSALSLLLALLLPHCQKLFVYDLHAVKNDFQIWRLICGRIICLDLKDTFCSSLLIYNFRIFERRYGSRKFASFLLGSWVLSALFDFLLVEAMQYFFGITAASNLPSGFLAPVFALFVPFYCSIPRVQVAQILGPLSITNKTLIYILGLQLFTSGSYIWIVAISGLMSGLCYNSKMFQVHQVLCIPSWMAKFFSWTLEPIFSSSEPTSEARIGMGATLDIQRQQRMELLDRQLMFSQFAQGRRQRQQQGGMINWNRLFPPLRQRQNVNYQGGRQSEPAAPPPLEVSEEQVARLMEMGFSRGDALEALRASNNDLNVATNFLLQH.

Positions 1 to 35 (MFTSTGSSGLYKAPLSKSLLLVPSALSLLLALLLP) are cleaved as a signal peptide. Over 36–91 (HCQKLFVYDLHAVKNDFQIWRLICGRIICLDLKDTFCSSLLIYNFRIFERRYGSRK) the chain is Extracellular. The chain crosses the membrane as a helical span at residues 92 to 112 (FASFLLGSWVLSALFDFLLVE). Residues 113–125 (AMQYFFGITAASN) are Cytoplasmic-facing. A helical transmembrane segment spans residues 126 to 146 (LPSGFLAPVFALFVPFYCSIP). Residues 147 to 163 (RVQVAQILGPLSITNKT) lie on the Extracellular side of the membrane. N-linked (GlcNAc...) asparagine glycosylation occurs at asparagine 161. Residues 164–184 (LIYILGLQLFTSGSYIWIVAI) form a helical membrane-spanning segment. Over 185 to 345 (SGLMSGLCYN…NVATNFLLQH (161 aa)) the chain is Cytoplasmic. In terms of domain architecture, UBA spans 305–345 (EVSEEQVARLMEMGFSRGDALEALRASNNDLNVATNFLLQH).

Interacts with LMBR1L, FAF2, AMFR and VCP.

The protein localises to the endoplasmic reticulum membrane. Functionally, restricts trafficking of FAF2 from the endoplasmic reticulum to lipid droplets. In association with LMBR1L and E3 ubiquitin-protein ligase AMFR, negatively regulates the canonical Wnt signaling pathway in the lymphocytes by promoting the ubiquitin-mediated degradation of CTNNB1 and Wnt receptors FZD6 and LRP6. This is Ubiquitin-associated domain-containing protein 2 (UBAC2) from Macaca fascicularis (Crab-eating macaque).